A 430-amino-acid chain; its full sequence is Glutamyl-tRNA reductase 1 (430 aa).

Residues 49–52 (TCNR), Ser109, 114–116 (EGQ), and Gln120 each bind substrate. The Nucleophile role is filled by Cys50. 189-194 (GAGSMA) contacts NADP(+).

The protein belongs to the glutamyl-tRNA reductase family. As to quaternary structure, homodimer.

The catalysed reaction is (S)-4-amino-5-oxopentanoate + tRNA(Glu) + NADP(+) = L-glutamyl-tRNA(Glu) + NADPH + H(+). It functions in the pathway porphyrin-containing compound metabolism; protoporphyrin-IX biosynthesis; 5-aminolevulinate from L-glutamyl-tRNA(Glu): step 1/2. Catalyzes the NADPH-dependent reduction of glutamyl-tRNA(Glu) to glutamate 1-semialdehyde (GSA). The chain is Glutamyl-tRNA reductase 1 from Nocardioides sp. (strain ATCC BAA-499 / JS614).